Reading from the N-terminus, the 98-residue chain is DNA-binding protein Fis (98 aa).

Positions 74–93 (QTRAATMMGINRGTLRKKLK) form a DNA-binding region, H-T-H motif.

It belongs to the transcriptional regulatory Fis family. In terms of assembly, homodimer.

Activates ribosomal RNA transcription. Plays a direct role in upstream activation of rRNA promoters. This is DNA-binding protein Fis from Photobacterium profundum (strain SS9).